We begin with the raw amino-acid sequence, 479 residues long: Ribulose bisphosphate carboxylase large chain (479 aa).

A propeptide spanning residues 1–2 (MS) is cleaved from the precursor. P3 bears the N-acetylproline mark. An N6,N6,N6-trimethyllysine modification is found at K14. Substrate is bound by residues N123 and T173. K175 acts as the Proton acceptor in catalysis. Position 177 (K177) interacts with substrate. Residues K201, D203, and E204 each contribute to the Mg(2+) site. An N6-carboxylysine modification is found at K201. H294 serves as the catalytic Proton acceptor. Substrate-binding residues include R295, H327, and S379.

The protein belongs to the RuBisCO large chain family. Type I subfamily. Heterohexadecamer of 8 large chains and 8 small chains. The cofactor is Mg(2+).

Its subcellular location is the plastid. It is found in the chloroplast. The enzyme catalyses 2 (2R)-3-phosphoglycerate + 2 H(+) = D-ribulose 1,5-bisphosphate + CO2 + H2O. It carries out the reaction D-ribulose 1,5-bisphosphate + O2 = 2-phosphoglycolate + (2R)-3-phosphoglycerate + 2 H(+). In terms of biological role, ruBisCO catalyzes two reactions: the carboxylation of D-ribulose 1,5-bisphosphate, the primary event in carbon dioxide fixation, as well as the oxidative fragmentation of the pentose substrate in the photorespiration process. Both reactions occur simultaneously and in competition at the same active site. This Jasminum nudiflorum (Winter jasmine) protein is Ribulose bisphosphate carboxylase large chain.